Here is a 1221-residue protein sequence, read N- to C-terminus: Reverse gyrase subunit B (1221 aa).

The segment at 56–97 (NEPVAIFGSSCVLCGGDCSSVRLTSRIGICERCLPVDTETLR) adopts an RG N-terminal-type zinc-finger fold. 4 residues coordinate Zn(2+): cysteine 66, cysteine 69, cysteine 85, and cysteine 88. Residues glutamine 161 and 178-185 (APTGTGKT) contribute to the ATP site. The Helicase ATP-binding domain maps to 165-400 (TRRLVKGCSF…AVVRELFDFE (236 aa)). Positions 284–287 (DDVD) match the DEAD box motif. Residues 424–600 (AVERIVRKAG…PLSLNTLMKL (177 aa)) enclose the Helicase C-terminal domain. The 157-residue stretch at 779–935 (SALMIVESPN…QVYRTEFHEV (157 aa)) folds into the Toprim domain. Glutamate 785 serves as a coordination point for Mg(2+). The segment at 856–882 (LGRCSECGEQVVGSEECPNCGGEVELK) adopts an RG C-terminal-type zinc-finger fold. The Zn(2+) site is built by cysteine 859, cysteine 862, cysteine 872, and cysteine 875. Aspartate 904 is a binding site for Mg(2+). Residues 953 to 1221 (DAGRVSAQIL…MLHLAGVSGR (269 aa)) enclose the Topo IA-type catalytic domain.

This sequence in the C-terminal section; belongs to the type IA topoisomerase family. The protein in the N-terminal section; belongs to the DEAD box helicase family. DDVD subfamily. As to quaternary structure, heterodimer of an RgyrA and RgyrB subunit. The topoisomerase domain is shared between the two subunits. Requires Zn(2+) as cofactor. It depends on Mg(2+) as a cofactor. Post-translationally, the N-terminus is partially blocked.

The protein localises to the cytoplasm. It catalyses the reaction ATP + H2O = ADP + phosphate + H(+). Modifies the topological state of DNA by introducing positive supercoils in an ATP-dependent process; dATP also allows positive supercoiling. Increases the linking number in steps of +1. Only this subunit binds ATP, it does so in a DNA- and RgyA-independent manner. Hydrolyzes ATP only in the presence of DNA. The RgyA subunit transiently cleaves a single DNA strand and remains covalently bound to the 5' DNA end probably through a tyrosine residue. It changes linking number in steps of one, and nicks DNA preferentially at 5'-CNNN | 3'-sites with a strong preference for 4 pyrimidine residues. There are about 1000 heterodimers per cell. May be involved in rewinding the DNA strands in the regions of the chromosome that have opened up to allow transcription or replication. Functionally, this subunit expressed in E.coli only has DNA-dependent ATPase activity at 80 degrees Celsius. Reverse gyrase activity is reconstituted after incubation at 80 degrees Celsius for 5 minutes, positive supercoiling requires ATP and Mg(2+). In the presence of ATP it binds and nicks substrate but does not make closed product. In Methanopyrus kandleri (strain AV19 / DSM 6324 / JCM 9639 / NBRC 100938), this protein is Reverse gyrase subunit B.